The following is a 174-amino-acid chain: Chromophore lyase CpcS/CpeS 1 (174 aa).

Belongs to the CpcS/CpeS biliprotein lyase family.

Functionally, covalently attaches a chromophore to Cys residue(s) of phycobiliproteins. The protein is Chromophore lyase CpcS/CpeS 1 of Trichodesmium erythraeum (strain IMS101).